An 817-amino-acid polypeptide reads, in one-letter code: Fibroblast growth factor receptor 2 (817 aa).

Residues 1–22 (MFARGWLLGALLLMTLATVSVA) form the signal peptide. Over 23 to 377 (RPSLKIDLVN…ETDYPPDYVE (355 aa)) the chain is Extracellular. Ig-like C2-type domains lie at 26–126 (LKID…VNVT), 159–247 (PEKM…YTLD), and 256–358 (PILQ…AWLT). N32, N84, and N124 each carry an N-linked (GlcNAc...) asparagine glycan. C63 and C108 are oxidised to a cystine. Residues 161-178 (KMEKKLHAVPAANTVKFR) form a heparin-binding region. Cysteines 179 and 231 form a disulfide. N-linked (GlcNAc...) asparagine glycosylation is found at N228, N265, N297, N318, and N331. C278 and C342 are oxidised to a cystine. A helical transmembrane segment spans residues 378 to 398 (IAIYCIGVFLIACMVVIVVVC). Residues 399-817 (RMRTSAKKPD…YQHINGGIKT (419 aa)) lie on the Cytoplasmic side of the membrane. Residues 429-465 (TVSSDSSSSMSSSTPLVRITTRRSSAHDDPIPEYDLP) form a disordered region. A compositionally biased stretch (low complexity) spans 431–441 (SSDSSSSMSSS). Y462 carries the phosphotyrosine; by autocatalysis modification. Positions 477-766 (LTLGKPLGEG…LTLATNEEYL (290 aa)) constitute a Protein kinase domain. ATP-binding positions include 483-491 (LGEGCFGQV), K513, 561-563 (EYA), and N567. Y582 carries the post-translational modification Phosphotyrosine; by autocatalysis. D622 (proton acceptor) is an active-site residue. A phosphotyrosine; by autocatalysis mark is found at Y652, Y653, and Y765.

It belongs to the protein kinase superfamily. Tyr protein kinase family. Fibroblast growth factor receptor subfamily. Monomer. Homodimer after ligand binding. In terms of processing, autophosphorylated. Binding of FGF family members together with heparan sulfate proteoglycan or heparin promotes receptor dimerization and autophosphorylation on tyrosine residues. Autophosphorylation occurs in trans between the two FGFR molecules present in the dimer. Post-translationally, N-glycosylated in the endoplasmic reticulum. The N-glycan chains undergo further maturation to an Endo H-resistant form in the Golgi apparatus. Ubiquitinated. FGFR2 is rapidly ubiquitinated after autophosphorylation, leading to internalization and degradation. Subject to degradation both in lysosomes and by the proteasome.

The protein resides in the cell membrane. It localises to the golgi apparatus. Its subcellular location is the cytoplasmic vesicle. The enzyme catalyses L-tyrosyl-[protein] + ATP = O-phospho-L-tyrosyl-[protein] + ADP + H(+). Its activity is regulated as follows. Present in an inactive conformation in the absence of bound ligand. Ligand binding leads to dimerization and activation by autophosphorylation on tyrosine residues. Its function is as follows. Tyrosine-protein kinase that acts as a cell-surface receptor for fibroblast growth factors and plays an essential role in the regulation of cell proliferation, differentiation, migration and apoptosis, and in the regulation of embryonic development. Required for normal embryonic patterning, limb bud development, lung morphogenesis, osteogenesis and skin development. Plays an essential role in the regulation of osteoblast differentiation, proliferation and apoptosis, and is required for normal skeleton development. Promotes cell proliferation in keratinocytes and immature osteoblasts, but promotes apoptosis in differentiated osteoblasts. Phosphorylates PLCG1, FRS2 and PAK4. Ligand binding leads to the activation of several signaling cascades. Activation of PLCG1 leads to the production of the cellular signaling molecules diacylglycerol and inositol 1,4,5-trisphosphate. Phosphorylation of FRS2 triggers recruitment of GRB2, GAB1, PIK3R1 and SOS1, and mediates activation of RAS, MAPK1/ERK2, MAPK3/ERK1 and the MAP kinase signaling pathway, as well as of the AKT1 signaling pathway. FGFR2 signaling is down-regulated by ubiquitination, internalization and degradation. Mutations that lead to constitutive kinase activation or impair normal FGFR2 maturation, internalization and degradation lead to aberrant signaling. Over-expressed FGFR2 promotes activation of STAT1. The protein is Fibroblast growth factor receptor 2 (fgfr2) of Danio rerio (Zebrafish).